The primary structure comprises 328 residues: Lateral signaling target 1 protein (328 aa).

3 disordered regions span residues Ser-56–Ser-78, Pro-108–Ser-135, and Pro-177–Gly-200. The segment covering Val-178–Gly-200 has biased composition (polar residues).

Interacts with fbf-2; the interaction probably mediates the release of the C-terminal tail of fbf-2 from the RNA-binding domain, thereby altering its RNA-binding affinity.

In terms of biological role, plays a role in germline stem cell maintenance, perhaps acting in concert with mRNA-binding factor fbf-2. May regulate fbf-2 by modulating RNA-binding and perhaps by competition with the intramolecular interaction between the fbf-2 RNA-binding domain and C-terminal tail. The polypeptide is Lateral signaling target 1 protein (Caenorhabditis elegans).